A 166-amino-acid chain; its full sequence is HTH-type transcriptional regulator PrsX (166 aa).

In terms of domain architecture, HTH marR-type spans 25–159; sequence EHLLMQLCIR…FEVINKKLLA (135 aa).

It localises to the cytoplasm. This is HTH-type transcriptional regulator PrsX (prsX) from Escherichia coli O6:H1 (strain CFT073 / ATCC 700928 / UPEC).